The sequence spans 552 residues: Hyaluronan synthase 2 (552 aa).

At 1–11 (MHCERFLCILR) the chain is on the cytoplasmic side. The chain crosses the membrane as a helical span at residues 12–32 (IIGTTLFGVSLLLGITAAYIV). Topologically, residues 33–45 (GYQFIQTDNYYFS) are extracellular. The helical transmembrane segment at 46–66 (FGLYGAFLASHLIIQSLFAFL) threads the bilayer. Over 67 to 374 (EHRKMKKSLE…NAMWFHKHHL (308 aa)) the chain is Cytoplasmic. Residue T110 is modified to Phosphothreonine. K190 is covalently cross-linked (Glycyl lysine isopeptide (Lys-Gly) (interchain with G-Cter in ubiquitin)). Residue S221 is glycosylated (O-linked (GlcNAc) serine). Phosphothreonine is present on T328. The chain crosses the membrane as a helical span at residues 375–395 (WMTYEAVITGFFPFFLIATVI). The Extracellular segment spans residues 396–402 (QLFYRGK). The helical transmembrane segment at 403-423 (IWNTLLFLLTVQLVGLIKSSF) threads the bilayer. The Cytoplasmic portion of the chain corresponds to 424–429 (ASCLRG). Residues 430-450 (NIVMVFMSLYSVLYMSSLLPA) form a helical membrane-spanning segment. Topologically, residues 451–475 (KMFAIATINKAGWGTSGRKTIVVNF) are extracellular. A helical transmembrane segment spans residues 476 to 496 (IGLIPVSVWFTILLGGVIFTI). The Cytoplasmic portion of the chain corresponds to 497–510 (YKESKKPFSESKQT). Residues 511–531 (VLIVGTLLYACYWVMLLTLYV) form a helical membrane-spanning segment. Over 532–552 (VLINKCGRRKKGQQYDMVLDV) the chain is Extracellular.

It belongs to the NodC/HAS family. As to quaternary structure, homodimer; dimerization promotes enzymatic activity. Forms heterodimer with HAS3. Forms heterodimer with HAS1. Mg(2+) is required as a cofactor. In terms of processing, phosphorylation at Thr-328 is essential for hyaluronan synthase activity. O-GlcNAcylation at Ser-221 increases the stability of HAS2 and plasma membrane localization. Post-translationally, ubiquitination at Lys-190; this ubiquitination is essential for hyaluronan synthase activity and homo- or hetero-oligomerization. Can also be poly-ubiquitinated. Deubiquitinated by USP17 and USP4. USP17 efficiently removes 'Lys-63'- and 'Lys-48'-linked polyubiquitin chains, whereas USP4 preferentially removes monoubiquitination and, partially, both 'Lys-63'- and 'Lys-48'-linked polyubiquitin chain. Expressed in corneal endothelial cells.

Its subcellular location is the cell membrane. The protein localises to the endoplasmic reticulum membrane. It localises to the vesicle. It is found in the golgi apparatus membrane. The protein resides in the lysosome. It carries out the reaction [hyaluronan](n) + UDP-N-acetyl-alpha-D-glucosamine = N-acetyl-beta-D-glucosaminyl-(1-&gt;4)-[hyaluronan](n) + UDP + H(+). The catalysed reaction is N-acetyl-beta-D-glucosaminyl-(1-&gt;4)-[hyaluronan](n) + UDP-alpha-D-glucuronate = [hyaluronan](n+1) + UDP + H(+). It functions in the pathway glycan biosynthesis; hyaluronan biosynthesis. Its function is as follows. Catalyzes the addition of GlcNAc or GlcUA monosaccharides to the nascent hyaluronan polymer. Therefore, it is essential to hyaluronan synthesis a major component of most extracellular matrices that has a structural role in tissues architectures and regulates cell adhesion, migration and differentiation. This is one of three isoenzymes responsible for cellular hyaluronan synthesis and it is particularly responsible for the synthesis of high molecular mass hyaluronan. In Bos taurus (Bovine), this protein is Hyaluronan synthase 2 (HAS2).